Consider the following 426-residue polypeptide: Histidine--tRNA ligase (426 aa).

Belongs to the class-II aminoacyl-tRNA synthetase family. As to quaternary structure, homodimer.

The protein resides in the cytoplasm. It catalyses the reaction tRNA(His) + L-histidine + ATP = L-histidyl-tRNA(His) + AMP + diphosphate + H(+). The sequence is that of Histidine--tRNA ligase from Streptococcus pyogenes serotype M3 (strain ATCC BAA-595 / MGAS315).